Here is a 494-residue protein sequence, read N- to C-terminus: Leucine-rich repeat extensin-like protein 4 (494 aa).

Positions 1 to 25 (MKNNTTQSLLLLLLFFFFFFEISHS) are cleaved as a signal peptide. 3 N-linked (GlcNAc...) asparagine glycosylation sites follow: asparagine 60, asparagine 94, and asparagine 106. LRR repeat units lie at residues 121–145 (IRTVAGIDLNHADIAGYLPEELGLL), 146–168 (TDLALFHVNSNRFCGTVPHKFKQ), 169–193 (LKLLFELDLSNNRFAGKFPTVVLHL), 194–217 (PSLKFLDLRFNEFEGTVPKELFSK), 219–240 (LDAIFINHNRFRFELPENFGDS), 242–263 (VSVIVLANNHFHGCIPTSLVEM), 264–287 (KNLNEIIFMNNGLNSCLPADIGRL), 289–311 (NVTVFDVSFNELVGPLPESVGGM), and 312–335 (VEVEQLNVAHNLLSGKIPASICQL). Asparagine 289 carries an N-linked (GlcNAc...) asparagine glycan. Asparagine 340 carries an N-linked (GlcNAc...) asparagine glycan. Residues 404–494 (SPPIVALPPP…YASPPPPPFY (91 aa)) are contains the Ser-Pro(4) repeats. Pro residues predominate over residues 422–479 (PPVYSPPPSPPVFSPPPSPPVYSPPPPPSIHYSSPPPPPVHHSSPPPPSPEFEGPLPP). The disordered stretch occupies residues 422–482 (PPVYSPPPSP…FEGPLPPVIG (61 aa)).

Hydroxylated on proline residues in the S-P-P-P-P repeat. In terms of processing, O-glycosylated on hydroxyprolines. As to expression, expressed in roots, stems, leaves and flowers, mostly in vascular tissues.

The protein localises to the secreted. Its subcellular location is the cell wall. Modulates cell morphogenesis by regulating cell wall formation and assembly, and/or growth polarization. The protein is Leucine-rich repeat extensin-like protein 4 (LRX4) of Arabidopsis thaliana (Mouse-ear cress).